Reading from the N-terminus, the 275-residue chain is tRNA uridine(34) hydroxylase (275 aa).

The Rhodanese domain occupies 122-218 (SRSDVYTIDT…YFKSTQNKNS (97 aa)). Cys178 (cysteine persulfide intermediate) is an active-site residue.

This sequence belongs to the TrhO family.

The catalysed reaction is uridine(34) in tRNA + AH2 + O2 = 5-hydroxyuridine(34) in tRNA + A + H2O. Its function is as follows. Catalyzes oxygen-dependent 5-hydroxyuridine (ho5U) modification at position 34 in tRNAs. This is tRNA uridine(34) hydroxylase from Ehrlichia chaffeensis (strain ATCC CRL-10679 / Arkansas).